A 119-amino-acid polypeptide reads, in one-letter code: Small ribosomal subunit protein uS13m (119 aa).

The protein belongs to the universal ribosomal protein uS13 family. As to quaternary structure, component of the mitochondrial small ribosomal subunit (mt-SSU). Mature N.crassa 74S mitochondrial ribosomes consist of a small (37S) and a large (54S) subunit. The 37S small subunit contains a 16S ribosomal RNA (16S mt-rRNA) and 32 different proteins. The 54S large subunit contains a 23S rRNA (23S mt-rRNA) and 42 different proteins.

The protein resides in the mitochondrion. Functionally, component of the mitochondrial ribosome (mitoribosome), a dedicated translation machinery responsible for the synthesis of mitochondrial genome-encoded proteins, including at least some of the essential transmembrane subunits of the mitochondrial respiratory chain. The mitoribosomes are attached to the mitochondrial inner membrane and translation products are cotranslationally integrated into the membrane. This Neurospora crassa (strain ATCC 24698 / 74-OR23-1A / CBS 708.71 / DSM 1257 / FGSC 987) protein is Small ribosomal subunit protein uS13m (sws2).